A 362-amino-acid chain; its full sequence is Dihydroorotate dehydrogenase (quinone) (362 aa).

Residues 62–66 (AGYDK) and Thr86 contribute to the FMN site. Lys66 contributes to the substrate binding site. 111 to 115 (NRLGF) contacts substrate. Positions 139 and 170 each coordinate FMN. Asn170 is a substrate binding site. Ser173 serves as the catalytic Nucleophile. Asn175 contributes to the substrate binding site. Residues Lys215 and Ser243 each coordinate FMN. 244-245 (NT) contacts substrate. Residues Gly266, Gly295, and 316 to 317 (YS) contribute to the FMN site.

Belongs to the dihydroorotate dehydrogenase family. Type 2 subfamily. Monomer. FMN serves as cofactor.

It is found in the cell membrane. It catalyses the reaction (S)-dihydroorotate + a quinone = orotate + a quinol. Its pathway is pyrimidine metabolism; UMP biosynthesis via de novo pathway; orotate from (S)-dihydroorotate (quinone route): step 1/1. Functionally, catalyzes the conversion of dihydroorotate to orotate with quinone as electron acceptor. The protein is Dihydroorotate dehydrogenase (quinone) of Rhizobium meliloti (strain 1021) (Ensifer meliloti).